Reading from the N-terminus, the 313-residue chain is uncharacterized protein (313 aa).

This sequence to B.subtilis YqxC and T.hyodysenteriae hemolysin TlyA.

This is an uncharacterized protein from Bacillus subtilis (strain 168).